A 90-amino-acid chain; its full sequence is Small ribosomal subunit protein bS16 (90 aa).

This sequence belongs to the bacterial ribosomal protein bS16 family.

The sequence is that of Small ribosomal subunit protein bS16 from Bacillus anthracis (strain A0248).